The sequence spans 659 residues: UvrABC system protein B (659 aa).

Residues 25–412 (QSIENGNRGQ…SEIVAEQIIR (388 aa)) enclose the Helicase ATP-binding domain. Position 38-45 (38-45 (GVTGSGKT)) interacts with ATP. The short motif at 91–114 (YYDYYQPEAYVPQTDTFIEKDASI) is the Beta-hairpin element. One can recognise a Helicase C-terminal domain in the interval 429–582 (QIDDLYGEIQ…QMEYNEEHNI (154 aa)). Residues 622 to 657 (EKLIEQYEEEMKEAAKNLQFERAAELRDIIKDLKEN) form the UVR domain.

This sequence belongs to the UvrB family. In terms of assembly, forms a heterotetramer with UvrA during the search for lesions. Interacts with UvrC in an incision complex.

It is found in the cytoplasm. In terms of biological role, the UvrABC repair system catalyzes the recognition and processing of DNA lesions. A damage recognition complex composed of 2 UvrA and 2 UvrB subunits scans DNA for abnormalities. Upon binding of the UvrA(2)B(2) complex to a putative damaged site, the DNA wraps around one UvrB monomer. DNA wrap is dependent on ATP binding by UvrB and probably causes local melting of the DNA helix, facilitating insertion of UvrB beta-hairpin between the DNA strands. Then UvrB probes one DNA strand for the presence of a lesion. If a lesion is found the UvrA subunits dissociate and the UvrB-DNA preincision complex is formed. This complex is subsequently bound by UvrC and the second UvrB is released. If no lesion is found, the DNA wraps around the other UvrB subunit that will check the other stand for damage. This is UvrABC system protein B from Clostridium perfringens (strain 13 / Type A).